Consider the following 118-residue polypeptide: Small ribosomal subunit protein uS13 (118 aa).

Residues 94–118 (SLPLRGQRTKTNARTRKGPRKPIRK) form a disordered region.

The protein belongs to the universal ribosomal protein uS13 family. In terms of assembly, part of the 30S ribosomal subunit. Forms a loose heterodimer with protein S19. Forms two bridges to the 50S subunit in the 70S ribosome.

In terms of biological role, located at the top of the head of the 30S subunit, it contacts several helices of the 16S rRNA. In the 70S ribosome it contacts the 23S rRNA (bridge B1a) and protein L5 of the 50S subunit (bridge B1b), connecting the 2 subunits; these bridges are implicated in subunit movement. Contacts the tRNAs in the A and P-sites. This Shewanella violacea (strain JCM 10179 / CIP 106290 / LMG 19151 / DSS12) protein is Small ribosomal subunit protein uS13.